A 1026-amino-acid polypeptide reads, in one-letter code: Multidrug resistance protein MdtC (1026 aa).

11 helical membrane passes run 15–35, 333–353, 360–380, 387–407, 431–451, 463–483, 528–548, 853–873, 897–917, 953–973, and 984–1004; these read ILIAAAITLCGILGFRLLPVA, EVEETLAISVALVIMVVFLFL, LIPAVAVPVSLIGTFAAMYLC, LSLMALTIATGFVVDDAIVVL, VGFTVISMSLSLVAVFLPLLL, FAVTLSVAIGISLVVSLTLTP, LVGVVFLGTVALNIWLYIAIP, LILIVAAIATVYIVLGILYES, LFNAPFSLIALIGIMLLIGIV, PIMMTTLAALFGALPLVLSGG, and ITIVGGLVMSQLLTLYTTPVV.

This sequence belongs to the resistance-nodulation-cell division (RND) (TC 2.A.6) family. MdtC subfamily. In terms of assembly, part of a tripartite efflux system composed of MdtA, MdtB and MdtC. MdtC forms a heteromultimer with MdtB.

The protein resides in the cell inner membrane. The protein is Multidrug resistance protein MdtC of Salmonella paratyphi C (strain RKS4594).